A 165-amino-acid chain; its full sequence is UPF0669 protein v1g209471 (165 aa).

The signal sequence occupies residues 1–23 (MQGRYSAPLFLLLWLFFLHGTLC). An N-linked (GlcNAc...) asparagine glycan is attached at Asn38.

It belongs to the UPF0669 family.

Its subcellular location is the secreted. The polypeptide is UPF0669 protein v1g209471 (Nematostella vectensis (Starlet sea anemone)).